A 379-amino-acid chain; its full sequence is Chaperone protein DnaJ (379 aa).

Residues 7–72 enclose the J domain; that stretch reads DYYEVLGVDK…KKRSMYDQFG (66 aa). Residues 147–225 form a CR-type zinc finger; sequence GKKAELSYTR…CGGNGLERKK (79 aa). Residues cysteine 160, cysteine 163, cysteine 177, cysteine 180, cysteine 199, cysteine 202, cysteine 213, and cysteine 216 each coordinate Zn(2+). 4 CXXCXGXG motif repeats span residues 160–167, 177–184, 199–206, and 213–220; these read CSECHGTG, CPDCKGTG, CPTCGGEG, and CKKCGGNG.

It belongs to the DnaJ family. Homodimer. Zn(2+) serves as cofactor.

It is found in the cytoplasm. In terms of biological role, participates actively in the response to hyperosmotic and heat shock by preventing the aggregation of stress-denatured proteins and by disaggregating proteins, also in an autonomous, DnaK-independent fashion. Unfolded proteins bind initially to DnaJ; upon interaction with the DnaJ-bound protein, DnaK hydrolyzes its bound ATP, resulting in the formation of a stable complex. GrpE releases ADP from DnaK; ATP binding to DnaK triggers the release of the substrate protein, thus completing the reaction cycle. Several rounds of ATP-dependent interactions between DnaJ, DnaK and GrpE are required for fully efficient folding. Also involved, together with DnaK and GrpE, in the DNA replication of plasmids through activation of initiation proteins. The protein is Chaperone protein DnaJ of Treponema denticola (strain ATCC 35405 / DSM 14222 / CIP 103919 / JCM 8153 / KCTC 15104).